The chain runs to 178 residues: High mobility group B protein 1 (178 aa).

2 stretches are compositionally biased toward basic and acidic residues: residues 1–52 (MKTA…DPNK) and 101–118 (APYE…EKQM). Disordered stretches follow at residues 1–59 (MKTA…APSA) and 75–178 (NPNV…EEED). The HMG box DNA-binding region spans 53-122 (PKRAPSAFFV…EYEKQMDAYN (70 aa)). Phosphoserine occurs at positions 137 and 146. Residues 140–178 (NDEDEASGEEELLEKEAAGDDEEEEEEEDDDDDDDEEED) show a composition bias toward acidic residues.

The protein belongs to the HMGB family. Expressed in cotyledons, roots, stems, leaves and flowers (excluding pedicels).

The protein localises to the nucleus. Its function is as follows. Binds preferentially double-stranded DNA. Modulates general plant growth and stress tolerance. Confers sensitivity to salt and genotoxic (methyl methanesulfonate, MMS) stresses. The protein is High mobility group B protein 1 (HMGB1) of Arabidopsis thaliana (Mouse-ear cress).